The following is a 520-amino-acid chain: 2-isopropylmalate synthase (520 aa).

Residues 12–274 (IRIFDTTLRD…DSAINTPRIV (263 aa)) form the Pyruvate carboxyltransferase domain. 4 residues coordinate Mn(2+): Asp-21, His-209, His-211, and Asn-245. The interval 396–520 (RLASMTISDV…VIAGKTAAVA (125 aa)) is regulatory domain.

It belongs to the alpha-IPM synthase/homocitrate synthase family. LeuA type 1 subfamily. As to quaternary structure, homodimer. Mn(2+) serves as cofactor.

The protein resides in the cytoplasm. It carries out the reaction 3-methyl-2-oxobutanoate + acetyl-CoA + H2O = (2S)-2-isopropylmalate + CoA + H(+). It participates in amino-acid biosynthesis; L-leucine biosynthesis; L-leucine from 3-methyl-2-oxobutanoate: step 1/4. Functionally, catalyzes the condensation of the acetyl group of acetyl-CoA with 3-methyl-2-oxobutanoate (2-ketoisovalerate) to form 3-carboxy-3-hydroxy-4-methylpentanoate (2-isopropylmalate). This is 2-isopropylmalate synthase from Xanthomonas oryzae pv. oryzae (strain MAFF 311018).